We begin with the raw amino-acid sequence, 336 residues long: Potassium channel subfamily K member 1 (336 aa).

Residues 1–20 (MLQSLAGSSCVRLVERHRSA) are Cytoplasmic-facing. A helical membrane pass occupies residues 21–41 (WCFGFLVLGYLLYLVFGAVVF). The Extracellular portion of the chain corresponds to 42 to 103 (SSVELPYEDL…SNASGNWNWD (62 aa)). A glycan (N-linked (GlcNAc...) asparagine) is linked at Asn-95. Residues 104–116 (FASALFFASTVLS) constitute an intramembrane region (helical). The stretch at 117–122 (TTGYGH) is an intramembrane region. Positions 117 to 122 (TTGYGH) are selectivity filter 1. The Extracellular portion of the chain corresponds to 123 to 132 (TVPLSDGGKA). A helical transmembrane segment spans residues 133 to 156 (FCIIYSVIGIPFTLLFLTAVVQRV). The Cytoplasmic portion of the chain corresponds to 157–181 (TVHVTRRPVLYFHVRWGFSKQVVAI). The chain crosses the membrane as a helical span at residues 182-202 (VHAVLLGLITVSCFFFIPAAV). Residues 203–211 (FSVLEDDWN) lie on the Extracellular side of the membrane. An intramembrane region (helical) is located at residues 212–224 (FLESFYFCFISLS). A selectivity filter 2 region spans residues 225 to 230 (TIGLGD). Residues 225–231 (TIGLGDY) lie within the membrane without spanning it. Residues 232 to 243 (VPGEGYNQKFRE) lie on the Extracellular side of the membrane. A helical membrane pass occupies residues 244-267 (LYKIGITCYLLLGLIAMLVVLETF). Residues 268–336 (CELHELKKFR…SACADGPANH (69 aa)) are Cytoplasmic-facing. Residue Lys-274 forms a Glycyl lysine isopeptide (Lys-Gly) (interchain with G-Cter in SUMO) linkage. The interval 293–299 (IIEHDQL) is important for intracellular retention in recycling endosomes. A disordered region spans residues 315–336 (QKQNEPFVATPSSACADGPANH). A Phosphoserine modification is found at Ser-326.

The protein belongs to the two pore domain potassium channel (TC 1.A.1.8) family. Homodimer; disulfide-linked. Heterodimer with KCNK2; disulfide-linked. In astrocytes, forms mostly heterodimeric potassium channels with KCNK2, with only a minor proportion of functional channels containing homodimeric KCNK1. Interacts with KCNK3 and KCNK9, forming functional heterodimeric channels. Interacts with GNG4. Identified in a complex with PSD and ARF6; interacts only with PSD that is bound to ARF6. Interacts with UBE2I. Sumoylation is controversial. Sumoylated by UBE2I. Not sumoylated when expressed in xenopus oocytes or mammalian cells. Sumoylation inactivates the channel, but does not interfere with expression at the cell membrane. Sumoylation of a single subunit is sufficient to silence the dimeric channel. Sumoylation of KCNK1 is sufficient to silence heterodimeric channels formed by KCNK1 and KCNK3 or KCNK9. Desumoylated by SENP1; this activates the channel. Desumoylated by SENP1; this strongly increases halothane-mediated activation of heterodimeric channels formed with KCNK9. SENP1 treatment has no effect. In terms of tissue distribution, expressed in renal distal tubules, especially in cortical collecting duct and cortical thick ascending limb, with lower levels in the connecting tubule.

The protein localises to the cell membrane. It localises to the recycling endosome. The protein resides in the synaptic cell membrane. It is found in the cytoplasmic vesicle. Its subcellular location is the perikaryon. The protein localises to the cell projection. It localises to the dendrite. The protein resides in the apical cell membrane. It carries out the reaction K(+)(in) = K(+)(out). The enzyme catalyses NH4(+)(in) = NH4(+)(out). It catalyses the reaction Na(+)(in) = Na(+)(out). The catalysed reaction is Rb(+)(in) = Rb(+)(out). It carries out the reaction Cs(+)(in) = Cs(+)(out). The enzyme catalyses Li(+)(in) = Li(+)(out). It catalyses the reaction L-glutamate(out) = L-glutamate(in). The catalysed reaction is chloride(in) = chloride(out). Ion channel that contributes to passive transmembrane potassium transport and to the regulation of the resting membrane potential in brain astrocytes, but also in kidney and in other tissues. Forms dimeric channels through which potassium ions pass in accordance with their electrochemical gradient. The channel is selective for K(+) ions at physiological potassium concentrations and at neutral pH, but becomes permeable to Na(+) at subphysiological K(+) levels and upon acidification of the extracellular medium. The homodimer has very low potassium channel activity, when expressed in heterologous systems, and can function as weakly inward rectifying potassium channel. Channel activity is modulated by activation of serotonin receptors. Heterodimeric channels containing KCNK1 and KCNK2 have much higher activity, and may represent the predominant form in astrocytes. Heterodimeric channels containing KCNK1 and KCNK3 or KCNK9 have much higher activity. Heterodimeric channels formed by KCNK1 and KCNK9 may contribute to halothane-sensitive currents. Mediates outward rectifying potassium currents in dentate gyrus granule cells and contributes to the regulation of their resting membrane potential. Contributes to the regulation of action potential firing in dentate gyrus granule cells and down-regulates their intrinsic excitability. In astrocytes, the heterodimer formed by KCNK1 and KCNK2 is required for rapid glutamate release in response to activation of G-protein coupled receptors, such as F2R and CNR1. Required for normal ion and water transport in the kidney. Contributes to the regulation of the resting membrane potential of pancreatic beta cells. The low channel activity of homodimeric KCNK1 may be due to sumoylation. The low channel activity may be due to rapid internalization from the cell membrane and retention in recycling endosomes. Permeable to monovalent cations with ion selectivity for K(+) &gt; Rb(+) &gt;&gt; NH4(+) &gt;&gt; Cs(+) = Na(+) = Li(+). This chain is Potassium channel subfamily K member 1, found in Oryctolagus cuniculus (Rabbit).